Reading from the N-terminus, the 302-residue chain is Oxygen-dependent coproporphyrinogen-III oxidase (302 aa).

Position 90 (Ser-90) interacts with substrate. Positions 94 and 104 each coordinate a divalent metal cation. Catalysis depends on His-104, which acts as the Proton donor. A substrate-binding site is contributed by 106-108 (NVR). A divalent metal cation-binding residues include His-143 and His-173. The segment at 238 to 273 (YVEFNLIYDRGTIFGLQSNGRTESILLSMPPIVKWR) is important for dimerization.

This sequence belongs to the aerobic coproporphyrinogen-III oxidase family. As to quaternary structure, homodimer. Requires a divalent metal cation as cofactor.

The protein localises to the cytoplasm. It catalyses the reaction coproporphyrinogen III + O2 + 2 H(+) = protoporphyrinogen IX + 2 CO2 + 2 H2O. It participates in porphyrin-containing compound metabolism; protoporphyrin-IX biosynthesis; protoporphyrinogen-IX from coproporphyrinogen-III (O2 route): step 1/1. Involved in the heme biosynthesis. Catalyzes the aerobic oxidative decarboxylation of propionate groups of rings A and B of coproporphyrinogen-III to yield the vinyl groups in protoporphyrinogen-IX. In Methylobacillus flagellatus (strain ATCC 51484 / DSM 6875 / VKM B-1610 / KT), this protein is Oxygen-dependent coproporphyrinogen-III oxidase.